Here is a 409-residue protein sequence, read N- to C-terminus: L-cysteine:1D-myo-inositol 2-amino-2-deoxy-alpha-D-glucopyranoside ligase (409 aa).

A disordered region spans residues 1–27 (MHAWPASEVPALPGQGRDLRIHDTATG). C43 serves as a coordination point for Zn(2+). Residues 43-46 (CGIT), T58, and 81-83 (NVT) contribute to the L-cysteinyl-5'-AMP site. The 'HIGH' region motif lies at 45–55 (ITPYDATHMGH). Positions 183 to 188 (ERGGDP) match the 'ERGGDP' region motif. W224 contacts L-cysteinyl-5'-AMP. C228 is a Zn(2+) binding site. 246-248 (GSD) is a binding site for L-cysteinyl-5'-AMP. Residue H253 coordinates Zn(2+). V280 is an L-cysteinyl-5'-AMP binding site. The short motif at 286–290 (KMSKS) is the 'KMSKS' region element.

It belongs to the class-I aminoacyl-tRNA synthetase family. MshC subfamily. As to quaternary structure, monomer. Zn(2+) is required as a cofactor.

The enzyme catalyses 1D-myo-inositol 2-amino-2-deoxy-alpha-D-glucopyranoside + L-cysteine + ATP = 1D-myo-inositol 2-(L-cysteinylamino)-2-deoxy-alpha-D-glucopyranoside + AMP + diphosphate + H(+). Catalyzes the ATP-dependent condensation of GlcN-Ins and L-cysteine to form L-Cys-GlcN-Ins. This is L-cysteine:1D-myo-inositol 2-amino-2-deoxy-alpha-D-glucopyranoside ligase (mshC) from Streptomyces coelicolor (strain ATCC BAA-471 / A3(2) / M145).